The following is a 342-amino-acid chain: uncharacterized protein (342 aa).

This is an uncharacterized protein from Acanthamoeba polyphaga (Amoeba).